The primary structure comprises 781 residues: MVSIDKYEIFLDFDFKNLIYKGYEKIYLSTDNEVVLDSVGLNIVSVKTEGKSVPFKISDSQIFIQTGKFDGVLEIEFEGKVKERGLVGIYKAPYDHSYIITTQFESVHAREFIPCIDHPAFKARFKLSVKVDKDLDVISNMPIEDVREEGDKKIVTFQETPRMSTYLLYLGIGKFEEIKDKLGEVDIIVATVPGRISKGKFALDVAKKVIEYYEDYFGIKYQLPKEHLIAIPEFAFGAMENWGAITFRETALLADESSSVQQKMRVASVVAHELAHQWFGDLVTMKWWDDLWLNESFATFMSHKAIAELYKEWDFWGTFINSETSGALFRDSLTTTHPIEAHVTSPEEIEQLFDDISYGKGASILRMIEAYLGDEDFRKGIQIYLNTYKYSNATGSDFWNSLEKGSGKPVSEIVKDWITKDGYPVVYVSVNGSKINLEQERFYLKGNGKNAVYKVPLTLEVNGRKITYLLEKEKDSIDIGSDIKSIKVNIDRTGFYRVYYNDLSLVFNSKLSHLDKWGLFNDYFNFFLAGRVNYTTYESIAKQFMKDDNYLVVDELVSELYYLWRVNRDKYKLLYEVLPYQVKRFSKRKDELSRRTYSYLLSTFAFVDEKFASGLAVAFEKYDTLDPNVKEAVAIAYAVTYGEDAYDELLNKYRSEKFDEEKTRLLYGLLSFREPYLVVNTMSLALTGEIKRQDVARILPYASYNPYSRLALWKWLKTHMEFLRSIYAGTAILGRTLRSVIPFLGLNNAEVVEYFTTNRFPEMEVEIKSGLEILDSLRRII.

Substrate is bound by residues Glu105 and 237–241 (GAMEN). His272 is a binding site for Zn(2+). Catalysis depends on Glu273, which acts as the Proton acceptor. Residues His276 and Glu295 each coordinate Zn(2+).

The protein belongs to the peptidase M1 family. Zn(2+) serves as cofactor.

It is found in the cytoplasm. The polypeptide is Probable aminopeptidase 2 (ape2) (Sulfurisphaera tokodaii (strain DSM 16993 / JCM 10545 / NBRC 100140 / 7) (Sulfolobus tokodaii)).